An 844-amino-acid chain; its full sequence is RNA-directed RNA polymerase (844 aa).

Position 248-255 (248-255) interacts with GTP; sequence GLPYIGKT. The RdRp catalytic domain maps to 384-588; it reads MIYADNIYIL…ENERLIASVA (205 aa). A disordered region spans residues 820–844; that stretch reads EFSEKIPLTPTQKKNAKRREKQRRN. Residues 833–844 show a composition bias toward basic residues; it reads KNAKRREKQRRN.

In terms of assembly, interacts with VP3 in the cytoplasm. In terms of processing, exists in multiple phosphorylated forms.

It localises to the virion. It catalyses the reaction RNA(n) + a ribonucleoside 5'-triphosphate = RNA(n+1) + diphosphate. RNA-dependent RNA polymerase which is found both free and covalently attached to the genomic RNA. May also contain guanylyl and methyl transferase activities. In Infectious pancreatic necrosis virus (strain Sp) (IPNV), this protein is RNA-directed RNA polymerase (VP1).